The primary structure comprises 752 residues: Sialidase 85-1.1 (752 aa).

An N-terminal signal peptide occupies residues M1–A23. 2 BNR repeats span residues I274–L285 and Y319–E330. The segment at A693–A725 is disordered. Residues A701–A711 show a composition bias toward low complexity.

It belongs to the glycosyl hydrolase 33 family.

The enzyme catalyses Hydrolysis of alpha-(2-&gt;3)-, alpha-(2-&gt;6)-, alpha-(2-&gt;8)- glycosidic linkages of terminal sialic acid residues in oligosaccharides, glycoproteins, glycolipids, colominic acid and synthetic substrates.. In terms of biological role, developmentally regulated neuraminidase implicated in parasite invasion of cells. May contribute to the pathology during T.cruzi infection by cleaving sialic acid from cells of the immune system. In Trypanosoma cruzi, this protein is Sialidase 85-1.1 (SA85-1.1).